The following is a 571-amino-acid chain: RUN and FYVE domain-containing protein 4 (571 aa).

An RUN domain is found at 33-166 (TDTSAELHRL…VAFELDLQQP (134 aa)). The interval 174 to 207 (MFSESRCSSSTQTQGRRPRKNKDAPKKIPAAYGG) is disordered. Polar residues predominate over residues 178–188 (SRCSSSTQTQG). Positions 408–481 (EVSLQDEIKS…ERRDAMYQEE (74 aa)) form a coiled coil. The segment at 474-567 (RDAMYQEELG…CCPPCAQGRE (94 aa)) adopts an FYVE-type zinc-finger fold. 8 residues coordinate Zn(2+): C521, C524, C537, C540, C545, C548, C559, and C562.

In terms of assembly, forms homodimers (via coiled coil domain). Interacts with RAB7A. Forms a ternary complex with RAB7A and LAMP2; the interaction with RAB7A is mediated by RUFY4 (via RUN and coiled coil domains). Interacts with GTP-, but not GDP-bound ARL8A and ARL8B. Interacts with dynactin/DCTN1 and the dynein intermediate chain DYNC1I1/2.

It is found in the cytoplasmic vesicle. Its subcellular location is the autophagosome. It localises to the lysosome. Functionally, ARL8 effector that promotes the coupling of endolysosomes to dynein-dynactin for retrograde transport along microtubules. Acts by binding both GTP-bound ARL8 and dynein-dynactin. In nonneuronal cells, promotes concentration of endolysosomes in the juxtanuclear area. In hippocampal neurons, drives retrograde transport of endolysosomes from the axon to the soma. Positive regulator of macroautophagy in dendritic cells. Increases autophagic flux, probably by stimulating both autophagosome formation and facilitating tethering with lysosomes. Binds to phosphatidylinositol 3-phosphate (PtdIns3P) through its FYVE-type zinc finger. Positive regulator of osteosclast bone-resorbing activity, possibly by promoting late endosome-lysosome fusion by acting as an adapter protein between RAB7A on late endosomes and LAMP2 on primary lysosomes. The chain is RUN and FYVE domain-containing protein 4 (RUFY4) from Homo sapiens (Human).